Reading from the N-terminus, the 455-residue chain is Hexokinase-2 (455 aa).

The region spanning 3–445 (ANFQQAVKKL…SGIGAALCAL (443 aa)) is the Hexokinase domain. A hexokinase small subdomain region spans residues 57-195 (TGAETGDFLA…NLPIRIEAVI (139 aa)). 68–73 (DFGGTN) lines the ATP pocket. Residues 144-145 (SY), 161-162 (TK), and 196-197 (ND) contribute to the substrate site. The hexokinase large subdomain stretch occupies residues 196–434 (NDTVGTLVTR…KLISIGIAKD (239 aa)). Thr-222 contacts ATP. The substrate site is built by Asn-225, Glu-252, and Glu-283. ATP contacts are provided by residues 288-289 (GM), 325-329 (TSVLS), and 400-404 (SLVEH).

This sequence belongs to the hexokinase family. Monomer.

The catalysed reaction is a D-hexose + ATP = a D-hexose 6-phosphate + ADP + H(+). It catalyses the reaction D-mannose + ATP = D-mannose 6-phosphate + ADP + H(+). It carries out the reaction D-fructose + ATP = D-fructose 6-phosphate + ADP + H(+). The enzyme catalyses D-glucose + ATP = D-glucose 6-phosphate + ADP + H(+). The protein operates within carbohydrate metabolism; hexose metabolism. It functions in the pathway carbohydrate degradation; glycolysis; D-glyceraldehyde 3-phosphate and glycerone phosphate from D-glucose: step 1/4. Catalyzes the phosphorylation of hexose (six-carbon sugars) to hexose 6-phosphate. Phosphorylates D-glucose, D-fructose and D-mannose. Compared to hxk1, has a much higher affinity for D-glucose. Constitutes the initial enzyme of glycolysis by catalyzing the phosphorylation of glucose to D-glucose 6-phosphate. In Schizosaccharomyces pombe (strain 972 / ATCC 24843) (Fission yeast), this protein is Hexokinase-2.